The chain runs to 218 residues: Glutathione S-transferase Mu 7 (218 aa).

The GST N-terminal domain occupies 1–88 (MPMTLGYWDI…YLGRKHNLCG (88 aa)). Glutathione is bound by residues 7 to 8 (YW), 46 to 50 (WLNEK), 59 to 60 (NL), and 72 to 73 (QS). Residues 90 to 208 (TEEERIRVDI…KTSRFLPRPM (119 aa)) form the GST C-terminal domain. Tyr116 serves as a coordination point for substrate.

This sequence belongs to the GST superfamily. Mu family. Homodimer.

It is found in the cytoplasm. The enzyme catalyses RX + glutathione = an S-substituted glutathione + a halide anion + H(+). Its function is as follows. Conjugation of reduced glutathione to a wide number of exogenous and endogenous hydrophobic electrophiles. This is Glutathione S-transferase Mu 7 (Gstm7) from Mus musculus (Mouse).